A 565-amino-acid chain; its full sequence is Probable protease Gilli_2517 (565 aa).

Functionally, probably a dedicated protease for substrate gasdermin bGSDM; cleaves the bGSDM precursor, releasing the pore-forming moiety, which integrates into the membrane and triggers cell death. Involved in defense against bacteriophages. Expression of bGSDM and this neighboring protease is not toxic in E.coli. In Gillisia limnaea (strain DSM 15749 / LMG 21470 / R-8282), this protein is Probable protease Gilli_2517.